We begin with the raw amino-acid sequence, 345 residues long: Aminopeptidase YpdE (345 aa).

Positions 62 and 166 each coordinate a divalent metal cation. Glu-198 serves as the catalytic Proton acceptor. A divalent metal cation contacts are provided by Glu-199, Asp-221, and His-308.

This sequence belongs to the peptidase M42 family. It depends on Co(2+) as a cofactor. Ni(2+) is required as a cofactor. Mn(2+) serves as cofactor. The cofactor is Cu(2+).

Functionally, has a broad aminopeptidase activity on non-blocked peptides by progressively cleaving amino acids off the peptide substrate. Aminopeptidase activity stops at the residue before the first proline in the peptide. Cannot cleave when proline is the first N-terminal residue. The chain is Aminopeptidase YpdE (ypdE) from Escherichia coli (strain K12).